The chain runs to 241 residues: Proteasome subunit alpha (241 aa).

Belongs to the peptidase T1A family. The 20S proteasome core is composed of 14 alpha and 14 beta subunits that assemble into four stacked heptameric rings, resulting in a barrel-shaped structure. The two inner rings, each composed of seven catalytic beta subunits, are sandwiched by two outer rings, each composed of seven alpha subunits. The catalytic chamber with the active sites is on the inside of the barrel. Has a gated structure, the ends of the cylinder being occluded by the N-termini of the alpha-subunits. Is capped at one or both ends by the proteasome regulatory ATPase, PAN.

The protein resides in the cytoplasm. Its activity is regulated as follows. The formation of the proteasomal ATPase PAN-20S proteasome complex, via the docking of the C-termini of PAN into the intersubunit pockets in the alpha-rings, triggers opening of the gate for substrate entry. Interconversion between the open-gate and close-gate conformations leads to a dynamic regulation of the 20S proteasome proteolysis activity. Component of the proteasome core, a large protease complex with broad specificity involved in protein degradation. The chain is Proteasome subunit alpha from Saccharolobus solfataricus (strain ATCC 35092 / DSM 1617 / JCM 11322 / P2) (Sulfolobus solfataricus).